Consider the following 348-residue polypeptide: Uroporphyrinogen decarboxylase (348 aa).

Substrate is bound by residues 27-31 (RQAGR), phenylalanine 46, aspartate 76, tyrosine 152, serine 207, and histidine 320.

The protein belongs to the uroporphyrinogen decarboxylase family. As to quaternary structure, homodimer.

It is found in the cytoplasm. The catalysed reaction is uroporphyrinogen III + 4 H(+) = coproporphyrinogen III + 4 CO2. The protein operates within porphyrin-containing compound metabolism; protoporphyrin-IX biosynthesis; coproporphyrinogen-III from 5-aminolevulinate: step 4/4. Catalyzes the decarboxylation of four acetate groups of uroporphyrinogen-III to yield coproporphyrinogen-III. The sequence is that of Uroporphyrinogen decarboxylase from Bacillus cytotoxicus (strain DSM 22905 / CIP 110041 / 391-98 / NVH 391-98).